A 446-amino-acid chain; its full sequence is Adenylosuccinate synthetase (446 aa).

Residues 20 to 26 (GDEGKGK) and 48 to 50 (GHT) each bind GTP. Residue Asp21 is the Proton acceptor of the active site. Mg(2+)-binding residues include Asp21 and Gly48. Residues 21–24 (DEGK), 46–49 (NAGH), Thr137, Arg151, Gln232, Thr247, and Arg319 each bind IMP. The active-site Proton donor is the His49. 315–321 (SVTGRPR) lines the substrate pocket. GTP contacts are provided by residues Arg321, 347–349 (KLD), and 429–431 (STG).

It belongs to the adenylosuccinate synthetase family. In terms of assembly, homodimer. The cofactor is Mg(2+).

The protein resides in the cytoplasm. It catalyses the reaction IMP + L-aspartate + GTP = N(6)-(1,2-dicarboxyethyl)-AMP + GDP + phosphate + 2 H(+). It participates in purine metabolism; AMP biosynthesis via de novo pathway; AMP from IMP: step 1/2. Functionally, plays an important role in the de novo pathway of purine nucleotide biosynthesis. Catalyzes the first committed step in the biosynthesis of AMP from IMP. The sequence is that of Adenylosuccinate synthetase from Ralstonia nicotianae (strain ATCC BAA-1114 / GMI1000) (Ralstonia solanacearum).